A 186-amino-acid polypeptide reads, in one-letter code: Ribosome-recycling factor (186 aa).

Belongs to the RRF family.

The protein localises to the cytoplasm. Its function is as follows. Responsible for the release of ribosomes from messenger RNA at the termination of protein biosynthesis. May increase the efficiency of translation by recycling ribosomes from one round of translation to another. In Chlorobium chlorochromatii (strain CaD3), this protein is Ribosome-recycling factor.